We begin with the raw amino-acid sequence, 883 residues long: Puromycin-sensitive aminopeptidase (883 aa).

Residues E125 and 265-269 each bind substrate; that span reads GAMEN. Residue H301 coordinates Zn(2+). The active-site Proton acceptor is E302. Positions 305 and 324 each coordinate Zn(2+).

The protein belongs to the peptidase M1 family. Zn(2+) is required as a cofactor.

The catalysed reaction is Release of an N-terminal amino acid, preferentially alanine, from a wide range of peptides, amides and arylamides.. Its activity is regulated as follows. Strongly inhibited by puromycin and DAMPAQ-22. Aminopeptidase with broad substrate specificity for several peptides. Involved in proteolytic events essential for cell growth and viability. Plays an essential role during prophase I of meiosis. Required for correct meiotic reconbination in both male and female gametophytes. The protein is Puromycin-sensitive aminopeptidase (MPA1) of Arabidopsis thaliana (Mouse-ear cress).